Consider the following 611-residue polypeptide: Dihydroxy-acid dehydratase (611 aa).

Mg(2+) is bound at residue Asp81. Residue Cys122 participates in [2Fe-2S] cluster binding. Positions 123 and 124 each coordinate Mg(2+). Lys124 is subject to N6-carboxylysine. Cys195 serves as a coordination point for [2Fe-2S] cluster. Glu491 is a Mg(2+) binding site. The Proton acceptor role is filled by Ser517.

It belongs to the IlvD/Edd family. Homodimer. [2Fe-2S] cluster is required as a cofactor. The cofactor is Mg(2+).

The catalysed reaction is (2R)-2,3-dihydroxy-3-methylbutanoate = 3-methyl-2-oxobutanoate + H2O. It carries out the reaction (2R,3R)-2,3-dihydroxy-3-methylpentanoate = (S)-3-methyl-2-oxopentanoate + H2O. It functions in the pathway amino-acid biosynthesis; L-isoleucine biosynthesis; L-isoleucine from 2-oxobutanoate: step 3/4. The protein operates within amino-acid biosynthesis; L-valine biosynthesis; L-valine from pyruvate: step 3/4. Functionally, functions in the biosynthesis of branched-chain amino acids. Catalyzes the dehydration of (2R,3R)-2,3-dihydroxy-3-methylpentanoate (2,3-dihydroxy-3-methylvalerate) into 2-oxo-3-methylpentanoate (2-oxo-3-methylvalerate) and of (2R)-2,3-dihydroxy-3-methylbutanoate (2,3-dihydroxyisovalerate) into 2-oxo-3-methylbutanoate (2-oxoisovalerate), the penultimate precursor to L-isoleucine and L-valine, respectively. In Histophilus somni (strain 129Pt) (Haemophilus somnus), this protein is Dihydroxy-acid dehydratase.